Reading from the N-terminus, the 907-residue chain is Clumping factor B (907 aa).

The first 44 residues, 1–44 (MKKRIDYLSNKQNKYSIRRFTVGTTSVIVGATILFGIGNHQAQA), serve as a signal peptide directing secretion. Residues 15-26 (YSIRRFTVGTTS) carry the YSIRK-G/S signaling motif motif. Composition is skewed to polar residues over residues 44–61 (ASEQ…NASA) and 68–101 (MIET…KPMS). The tract at residues 44–191 (ASEQSNDTTQ…AQGTSKPSVR (148 aa)) is disordered. The ligand binding A region stretch occupies residues 45-542 (SEQSNDTTQS…GSADGDSAVN (498 aa)). Positions 102–119 (TQTSNTTTTEPASTNETP) are enriched in low complexity. A compositionally biased stretch (polar residues) spans 134 to 189 (QDQTVPQEANSQVDNKTTNDANSIATNSELKNPQTLDLPQSSPQTISNAQGTSKPS). Residues 272-276 (DYSNS) carry the MIDAS-like motif motif. The segment at 530–879 (YGGGSADGDS…ETGDKSENTN (350 aa)) is disordered. A compositionally biased stretch (pro residues) spans 545 to 555 (DPTPGPPVDPE). Over residues 556-831 (PSPDPEPEPS…SDSDSDSDSD (276 aa)) the composition is skewed to acidic residues. Residues 835-846 (RVTPPNNEQKAP) show a composition bias toward polar residues. Residues 863-876 (HKTDALPETGDKSE) are compositionally biased toward basic and acidic residues. Residues 868 to 872 (LPETG) carry the LPXTG sorting signal motif. Thr-871 bears the Pentaglycyl murein peptidoglycan amidated threonine mark. Residues 872 to 907 (GDKSENTNATLFGAMMALLGSLLLFRKRKQDHKEKA) constitute a propeptide, removed by sortase.

Belongs to the serine-aspartate repeat-containing protein (SDr) family. Post-translationally, proteolytically cleaved by aureolysin (aur). This cleavage leads to the inactivation of ClfB.

The protein localises to the secreted. Its subcellular location is the cell wall. Functionally, cell surface-associated protein implicated in virulence by promoting bacterial attachment to both alpha- and beta-chains of human fibrinogen and inducing the formation of bacterial clumps. The sequence is that of Clumping factor B (clfB) from Staphylococcus aureus (strain MW2).